A 96-amino-acid chain; its full sequence is (4S)-4-hydroxy-5-phosphonooxypentane-2,3-dione isomerase (96 aa).

An ABM domain is found at 2–91; that stretch reads HVTLVEINVH…MTGPRKKRLF (90 aa).

It belongs to the LsrG family. Homodimer.

Its subcellular location is the cytoplasm. It catalyses the reaction (2S)-2-hydroxy-3,4-dioxopentyl phosphate = 3-hydroxy-2,4-dioxopentyl phosphate. Its function is as follows. Involved in the degradation of phospho-AI-2, thereby terminating induction of the lsr operon and closing the AI-2 signaling cycle. Catalyzes the conversion of (4S)-4-hydroxy-5-phosphonooxypentane-2,3-dione (P-DPD) to 3-hydroxy-5-phosphonooxypentane-2,4-dione (P-HPD). The sequence is that of (4S)-4-hydroxy-5-phosphonooxypentane-2,3-dione isomerase from Escherichia coli O9:H4 (strain HS).